A 724-amino-acid chain; its full sequence is Pre-mRNA-splicing factor CLF1 (724 aa).

HAT repeat units lie at residues 55–87 (EFQARKRTEFESRIRYSRDSILAWTKYAQWEAS), 89–121 (NEYERSRSVFERALDVDPRSVDLWIKYTDMELK), 123–155 (RNINHARNLFDRAITLLPRVDALWYKYVYLEEL), 157–188 (LNVSGARQIFERWMQWEPNDKAWQSYIKLEER), 190–221 (NELDRASAIYERWIACRPIPKNWVAWAKFEED), 223–262 (GQPDKAREVFQTALEFFGDEEEQVEKAQSVFAAFARMETR), 264–298 (KEFERARVIYKFALARLPRSKSASLYAQYTKFEKQ), 308–340 (TVLGKRRIQYEEELAYDPTNYDAWFSLARLEED), 352–386 (VEPMRVREVYERAVANVPPALEKRYWRRYIYLWLQ), 396–432 (KDYDRARDVYKAAVKLVPHKTFTFAKLWLAYAYFEIR), 434–465 (LDVSAARKVLGAGIGMCPKPKLFTGYIELEMR), 467–499 (REFDRVRTLYEKFLTYDPSLSSAWIQWTQVESA), 501–534 (EDFERVRAIFELAVQQSLDMPEIVWKAYIDFEAG), 536–567 (GERERARNLYERLLERTSHVKVWISYALMEIA), 585–626 (GDAD…EHGD), and 635–667 (DMLPTTRKRWRKAEDGSGELEEYWDLVFPDDEK). Residues 681-724 (QAWAQQRAGQGEEGGLSYDLPSDSESENEDEDGDNREEEGMDQD) form a disordered region. The span at 702–724 (SDSESENEDEDGDNREEEGMDQD) shows a compositional bias: acidic residues.

The protein belongs to the crooked-neck family. In terms of assembly, associated with the spliceosome.

It localises to the nucleus. Functionally, involved in pre-mRNA splicing and cell cycle progression. Required for the spliceosome assembly and initiation of the DNA replication. The sequence is that of Pre-mRNA-splicing factor CLF1 (CLF1) from Cryptococcus neoformans var. grubii serotype A (strain H99 / ATCC 208821 / CBS 10515 / FGSC 9487) (Filobasidiella neoformans var. grubii).